The sequence spans 376 residues: Actin, macronuclear (376 aa).

It belongs to the actin family.

The protein resides in the cytoplasm. It is found in the cytoskeleton. It catalyses the reaction ATP + H2O = ADP + phosphate + H(+). Functionally, actins are highly conserved proteins that are involved in various types of cell motility and are ubiquitously expressed in all eukaryotic cells. The polypeptide is Actin, macronuclear (Tetrahymena thermophila).